A 121-amino-acid chain; its full sequence is Small ribosomal subunit protein uS13 (121 aa).

The disordered stretch occupies residues 93-121 (KGLPMRGQRTRTNARTRKGPRRAAQALKK).

This sequence belongs to the universal ribosomal protein uS13 family. Part of the 30S ribosomal subunit. Forms a loose heterodimer with protein S19. Forms two bridges to the 50S subunit in the 70S ribosome.

Located at the top of the head of the 30S subunit, it contacts several helices of the 16S rRNA. In the 70S ribosome it contacts the 23S rRNA (bridge B1a) and protein L5 of the 50S subunit (bridge B1b), connecting the 2 subunits; these bridges are implicated in subunit movement. Contacts the tRNAs in the A and P-sites. In Burkholderia ambifaria (strain ATCC BAA-244 / DSM 16087 / CCUG 44356 / LMG 19182 / AMMD) (Burkholderia cepacia (strain AMMD)), this protein is Small ribosomal subunit protein uS13.